The chain runs to 195 residues: Holliday junction branch migration complex subunit RuvA (195 aa).

The domain I stretch occupies residues 1 to 63 (MIASVRGEVL…EDSQTLYGFA (63 aa)). Residues 64-138 (DSDARDLFLT…DKVGSSTSSG (75 aa)) are domain II. The segment at 138–142 (GVAAA) is flexible linker. The segment at 143 to 195 (GGHGIRGPVVEALVGLGFAVKQAEEATDKVLANDPEATTSSALRAALSMLGKK) is domain III.

This sequence belongs to the RuvA family. As to quaternary structure, homotetramer. Forms an RuvA(8)-RuvB(12)-Holliday junction (HJ) complex. HJ DNA is sandwiched between 2 RuvA tetramers; dsDNA enters through RuvA and exits via RuvB. An RuvB hexamer assembles on each DNA strand where it exits the tetramer. Each RuvB hexamer is contacted by two RuvA subunits (via domain III) on 2 adjacent RuvB subunits; this complex drives branch migration. In the full resolvosome a probable DNA-RuvA(4)-RuvB(12)-RuvC(2) complex forms which resolves the HJ.

Its subcellular location is the cytoplasm. In terms of biological role, the RuvA-RuvB-RuvC complex processes Holliday junction (HJ) DNA during genetic recombination and DNA repair, while the RuvA-RuvB complex plays an important role in the rescue of blocked DNA replication forks via replication fork reversal (RFR). RuvA specifically binds to HJ cruciform DNA, conferring on it an open structure. The RuvB hexamer acts as an ATP-dependent pump, pulling dsDNA into and through the RuvAB complex. HJ branch migration allows RuvC to scan DNA until it finds its consensus sequence, where it cleaves and resolves the cruciform DNA. This Mycolicibacterium gilvum (strain PYR-GCK) (Mycobacterium gilvum (strain PYR-GCK)) protein is Holliday junction branch migration complex subunit RuvA.